We begin with the raw amino-acid sequence, 259 residues long: Uridylate kinase (259 aa).

ATP is bound at residue 21-24 (KLSG). UMP is bound at residue Gly-63. 2 residues coordinate ATP: Gly-64 and Arg-68. UMP contacts are provided by residues Asp-83 and 144–151 (TGNPYFTT). Residues Thr-171, Phe-177, and Asp-180 each contribute to the ATP site.

This sequence belongs to the UMP kinase family. Homohexamer.

It is found in the cytoplasm. The catalysed reaction is UMP + ATP = UDP + ADP. The protein operates within pyrimidine metabolism; CTP biosynthesis via de novo pathway; UDP from UMP (UMPK route): step 1/1. Its activity is regulated as follows. Inhibited by UTP. In terms of biological role, catalyzes the reversible phosphorylation of UMP to UDP. The protein is Uridylate kinase of Salinibacter ruber (strain DSM 13855 / M31).